We begin with the raw amino-acid sequence, 406 residues long: Acetate kinase (406 aa).

N7 serves as a coordination point for Mg(2+). K14 contributes to the ATP binding site. R90 provides a ligand contact to substrate. Residue D147 is the Proton donor/acceptor of the active site. Residues 207 to 211 (HLGNG), 283 to 285 (DMR), and 331 to 335 (GVGEN) each bind ATP. E385 provides a ligand contact to Mg(2+).

The protein belongs to the acetokinase family. As to quaternary structure, homodimer. Mg(2+) serves as cofactor. Mn(2+) is required as a cofactor.

It localises to the cytoplasm. It carries out the reaction acetate + ATP = acetyl phosphate + ADP. Its pathway is metabolic intermediate biosynthesis; acetyl-CoA biosynthesis; acetyl-CoA from acetate: step 1/2. In terms of biological role, catalyzes the formation of acetyl phosphate from acetate and ATP. Can also catalyze the reverse reaction. The protein is Acetate kinase of Thermosipho melanesiensis (strain DSM 12029 / CIP 104789 / BI429).